A 698-amino-acid polypeptide reads, in one-letter code: Testis-specific gene 10 protein (698 aa).

S163 carries the phosphoserine modification. An interaction with HIF1A region spans residues 556–689 (QMANERISMQ…SPDRGLDRSL (134 aa)). Residues 659–670 (HMSSTMKPNTKC) show a composition bias toward polar residues. A disordered region spans residues 659-685 (HMSSTMKPNTKCHSPERAHHRSPDRGL). Over residues 671–685 (HSPERAHHRSPDRGL) the composition is skewed to basic and acidic residues. At S688 the chain carries Phosphoserine.

The protein belongs to the CEP135/TSGA10 family. Interacts with HIF1A. In terms of processing, processed into N-terminal 27-kDa and C-terminal 55-kDa fragments. In terms of tissue distribution, expressed in the testis, in spermatozoa (at protein level). Expressed in actively dividing fetal tissues, including sternum, intestine, limb, kidney and stomach.

It is found in the cytoplasm. It localises to the cytoskeleton. The protein resides in the microtubule organizing center. Its subcellular location is the centrosome. The protein localises to the centriole. Its function is as follows. Plays a role in spermatogenesis. When overexpressed, prevents nuclear localization of HIF1A. The chain is Testis-specific gene 10 protein (TSGA10) from Homo sapiens (Human).